The sequence spans 207 residues: Thiamine-phosphate synthase (207 aa).

4-amino-2-methyl-5-(diphosphooxymethyl)pyrimidine-binding positions include 36-40 and N68; that span reads QLRMK. Mg(2+) is bound by residues D69 and D88. Position 106 (S106) interacts with 4-amino-2-methyl-5-(diphosphooxymethyl)pyrimidine. 2-[(2R,5Z)-2-carboxy-4-methylthiazol-5(2H)-ylidene]ethyl phosphate is bound at residue 132-134; sequence TNT. K135 contributes to the 4-amino-2-methyl-5-(diphosphooxymethyl)pyrimidine binding site. 2-[(2R,5Z)-2-carboxy-4-methylthiazol-5(2H)-ylidene]ethyl phosphate-binding positions include G162 and 182–183; that span reads VS.

Belongs to the thiamine-phosphate synthase family. It depends on Mg(2+) as a cofactor.

The enzyme catalyses 2-[(2R,5Z)-2-carboxy-4-methylthiazol-5(2H)-ylidene]ethyl phosphate + 4-amino-2-methyl-5-(diphosphooxymethyl)pyrimidine + 2 H(+) = thiamine phosphate + CO2 + diphosphate. The catalysed reaction is 2-(2-carboxy-4-methylthiazol-5-yl)ethyl phosphate + 4-amino-2-methyl-5-(diphosphooxymethyl)pyrimidine + 2 H(+) = thiamine phosphate + CO2 + diphosphate. It carries out the reaction 4-methyl-5-(2-phosphooxyethyl)-thiazole + 4-amino-2-methyl-5-(diphosphooxymethyl)pyrimidine + H(+) = thiamine phosphate + diphosphate. Its pathway is cofactor biosynthesis; thiamine diphosphate biosynthesis; thiamine phosphate from 4-amino-2-methyl-5-diphosphomethylpyrimidine and 4-methyl-5-(2-phosphoethyl)-thiazole: step 1/1. Its function is as follows. Condenses 4-methyl-5-(beta-hydroxyethyl)thiazole monophosphate (THZ-P) and 2-methyl-4-amino-5-hydroxymethyl pyrimidine pyrophosphate (HMP-PP) to form thiamine monophosphate (TMP). This chain is Thiamine-phosphate synthase, found in Methanococcus maripaludis (strain C7 / ATCC BAA-1331).